The primary structure comprises 274 residues: NADPH-dependent 7-cyano-7-deazaguanine reductase (274 aa).

80-82 contributes to the substrate binding site; the sequence is VES. Residue 82-83 participates in NADPH binding; it reads SK. The active-site Thioimide intermediate is the cysteine 181. Residue aspartate 188 is the Proton donor of the active site. Substrate is bound at residue 220-221; that stretch reads HE. 249-250 contacts NADPH; the sequence is RG.

This sequence belongs to the GTP cyclohydrolase I family. QueF type 2 subfamily. As to quaternary structure, homodimer.

The protein resides in the cytoplasm. It catalyses the reaction 7-aminomethyl-7-carbaguanine + 2 NADP(+) = 7-cyano-7-deazaguanine + 2 NADPH + 3 H(+). It functions in the pathway tRNA modification; tRNA-queuosine biosynthesis. Catalyzes the NADPH-dependent reduction of 7-cyano-7-deazaguanine (preQ0) to 7-aminomethyl-7-deazaguanine (preQ1). This chain is NADPH-dependent 7-cyano-7-deazaguanine reductase, found in Burkholderia pseudomallei (strain 1710b).